The sequence spans 305 residues: NAD-dependent protein deacylase sirtuin-5, mitochondrial (305 aa).

The transit peptide at 1 to 32 directs the protein to the mitochondrion; it reads MIVRQLWCSRGSTSHLCAAVRLNWRSPKMTRP. The Deacetylase sirtuin-type domain occupies 33–303; sequence SSDLTAFREH…PPALERHESE (271 aa). 54-73 provides a ligand contact to NAD(+); it reads GAGVSAESGVPTFRGPGGFW. Residues Tyr-98 and Arg-101 each contribute to the substrate site. Position 136 to 139 (136 to 139) interacts with NAD(+); that stretch reads QNID. Residue His-154 is the Proton acceptor of the active site. The Zn(2+) site is built by Cys-162, Cys-165, Cys-203, and Cys-208. NAD(+)-binding positions include 245–247, 271–273, and Cys-289; these read GTS and NME.

It belongs to the sirtuin family. Class III subfamily. The cofactor is Zn(2+).

Its subcellular location is the mitochondrion. The protein resides in the cytoplasm. The protein localises to the cytosol. It localises to the nucleus. The enzyme catalyses N(6)-malonyl-L-lysyl-[protein] + NAD(+) + H2O = 2''-O-malonyl-ADP-D-ribose + nicotinamide + L-lysyl-[protein]. It carries out the reaction N(6)-succinyl-L-lysyl-[protein] + NAD(+) + H2O = 2''-O-succinyl-ADP-D-ribose + nicotinamide + L-lysyl-[protein]. The catalysed reaction is N(6)-glutaryl-L-lysyl-[protein] + NAD(+) + H2O = 2''-O-glutaryl-ADP-D-ribose + nicotinamide + L-lysyl-[protein]. In terms of biological role, NAD-dependent lysine demalonylase, desuccinylase and deglutarylase that specifically removes malonyl, succinyl and glutaryl groups on target proteins. Has weak NAD-dependent protein deacetylase activity; however this activity may not be physiologically relevant in vivo. In Danio rerio (Zebrafish), this protein is NAD-dependent protein deacylase sirtuin-5, mitochondrial (sirt5).